The sequence spans 406 residues: Tryptophan synthase beta chain (406 aa).

Lysine 95 carries the N6-(pyridoxal phosphate)lysine modification.

This sequence belongs to the TrpB family. In terms of assembly, tetramer of two alpha and two beta chains. It depends on pyridoxal 5'-phosphate as a cofactor.

It carries out the reaction (1S,2R)-1-C-(indol-3-yl)glycerol 3-phosphate + L-serine = D-glyceraldehyde 3-phosphate + L-tryptophan + H2O. The protein operates within amino-acid biosynthesis; L-tryptophan biosynthesis; L-tryptophan from chorismate: step 5/5. The beta subunit is responsible for the synthesis of L-tryptophan from indole and L-serine. This is Tryptophan synthase beta chain from Pseudomonas fluorescens (strain ATCC BAA-477 / NRRL B-23932 / Pf-5).